The primary structure comprises 548 residues: MAAKDVKFGNDARVKMLRGVNVLADAVKVTLGPKGRNVVLDKSFGAPTITKDGVSVAREIELEDKFENMGAQMVKEVASKANDAAGDGTTTATVLAQSIITEGLKAVAAGMNPMDLKRGIDKAVAAAVEELKALSVPCSDSKAIAQVGTISANSDETVGKLIAEAMDKVGKEGVITVEDGTGLQDELDVVEGMQFDRGYLSPYFINKPETGAVELESPFILLADKKISNIREMLPVLEAVAKAGKPLLIIAEDVEGEALATLVVNTMRGIVKVAAVKAPGFGDRRKAMLQDIATLTGGTVISEEIGMELEKATLEDLGQAKRVVINKDTTTIIDGVGGEAAIQGRVAQIRQQIEEATSDYDREKLQERVAKLAGGVAVIKVGAATEVEMKEKKARVEDALHATRAAVEEGVVAGGGVALIRVASKIADLKGQNEDQNVGIKVALRAMEAPLRQIVLNCGEEPSVVANTVKGGDGNYGYNAATEEYGNMIDMGILDPTKVTRSALQYAASVAGLMITTECMVTDLPKSDAPDLGAAGGMGGMGGMGGMM.

ATP contacts are provided by residues 30–33 (TLGP), Lys-51, 87–91 (DGTTT), Gly-415, 479–481 (NAA), and Asp-495.

This sequence belongs to the chaperonin (HSP60) family. Forms a cylinder of 14 subunits composed of two heptameric rings stacked back-to-back. Interacts with the co-chaperonin GroES.

It localises to the cytoplasm. The enzyme catalyses ATP + H2O + a folded polypeptide = ADP + phosphate + an unfolded polypeptide.. Functionally, together with its co-chaperonin GroES, plays an essential role in assisting protein folding. The GroEL-GroES system forms a nano-cage that allows encapsulation of the non-native substrate proteins and provides a physical environment optimized to promote and accelerate protein folding. This is Chaperonin GroEL from Salmonella gallinarum (strain 287/91 / NCTC 13346).